Here is a 268-residue protein sequence, read N- to C-terminus: Indole-3-glycerol phosphate synthase 2 (268 aa).

This sequence belongs to the TrpC family.

The enzyme catalyses 1-(2-carboxyphenylamino)-1-deoxy-D-ribulose 5-phosphate + H(+) = (1S,2R)-1-C-(indol-3-yl)glycerol 3-phosphate + CO2 + H2O. It functions in the pathway amino-acid biosynthesis; L-tryptophan biosynthesis; L-tryptophan from chorismate: step 4/5. The polypeptide is Indole-3-glycerol phosphate synthase 2 (trpC2) (Ralstonia nicotianae (strain ATCC BAA-1114 / GMI1000) (Ralstonia solanacearum)).